A 155-amino-acid chain; its full sequence is SsrA-binding protein (155 aa).

It belongs to the SmpB family.

Its subcellular location is the cytoplasm. Required for rescue of stalled ribosomes mediated by trans-translation. Binds to transfer-messenger RNA (tmRNA), required for stable association of tmRNA with ribosomes. tmRNA and SmpB together mimic tRNA shape, replacing the anticodon stem-loop with SmpB. tmRNA is encoded by the ssrA gene; the 2 termini fold to resemble tRNA(Ala) and it encodes a 'tag peptide', a short internal open reading frame. During trans-translation Ala-aminoacylated tmRNA acts like a tRNA, entering the A-site of stalled ribosomes, displacing the stalled mRNA. The ribosome then switches to translate the ORF on the tmRNA; the nascent peptide is terminated with the 'tag peptide' encoded by the tmRNA and targeted for degradation. The ribosome is freed to recommence translation, which seems to be the essential function of trans-translation. The protein is SsrA-binding protein of Streptococcus equi subsp. zooepidemicus (strain H70).